We begin with the raw amino-acid sequence, 148 residues long: SsrA-binding protein (148 aa).

Positions 123–148 (KLHDKRETEKKRDWEREKARIMRSAT) are disordered. Over residues 126–142 (DKRETEKKRDWEREKAR) the composition is skewed to basic and acidic residues.

The protein belongs to the SmpB family.

Its subcellular location is the cytoplasm. Functionally, required for rescue of stalled ribosomes mediated by trans-translation. Binds to transfer-messenger RNA (tmRNA), required for stable association of tmRNA with ribosomes. tmRNA and SmpB together mimic tRNA shape, replacing the anticodon stem-loop with SmpB. tmRNA is encoded by the ssrA gene; the 2 termini fold to resemble tRNA(Ala) and it encodes a 'tag peptide', a short internal open reading frame. During trans-translation Ala-aminoacylated tmRNA acts like a tRNA, entering the A-site of stalled ribosomes, displacing the stalled mRNA. The ribosome then switches to translate the ORF on the tmRNA; the nascent peptide is terminated with the 'tag peptide' encoded by the tmRNA and targeted for degradation. The ribosome is freed to recommence translation, which seems to be the essential function of trans-translation. This is SsrA-binding protein from Burkholderia pseudomallei (strain 1710b).